A 601-amino-acid polypeptide reads, in one-letter code: Aspartate--tRNA(Asp/Asn) ligase (601 aa).

Position 177 (glutamate 177) interacts with L-aspartate. The segment at 201–204 (QLFK) is aspartate. Arginine 223 contributes to the L-aspartate binding site. Residues 223-225 (RDE) and glutamine 232 each bind ATP. L-aspartate is bound at residue histidine 455. Glutamate 489 serves as a coordination point for ATP. Arginine 496 contributes to the L-aspartate binding site. 541-544 (GWDR) is a binding site for ATP. The segment at 568-601 (VDPLTDAPAPIPLEQRRETGVDFKPKKKTDESAV) is disordered. A compositionally biased stretch (basic and acidic residues) spans 581–601 (EQRRETGVDFKPKKKTDESAV).

Belongs to the class-II aminoacyl-tRNA synthetase family. Type 1 subfamily. As to quaternary structure, homodimer.

The protein resides in the cytoplasm. The catalysed reaction is tRNA(Asx) + L-aspartate + ATP = L-aspartyl-tRNA(Asx) + AMP + diphosphate. Aspartyl-tRNA synthetase with relaxed tRNA specificity since it is able to aspartylate not only its cognate tRNA(Asp) but also tRNA(Asn). Reaction proceeds in two steps: L-aspartate is first activated by ATP to form Asp-AMP and then transferred to the acceptor end of tRNA(Asp/Asn). This is Aspartate--tRNA(Asp/Asn) ligase from Corynebacterium diphtheriae (strain ATCC 700971 / NCTC 13129 / Biotype gravis).